Consider the following 504-residue polypeptide: DnaJ homolog subfamily C member 3 (504 aa).

Positions 1 to 31 are cleaved as a signal peptide; that stretch reads MVAPGSVGSRLGAVFPFLLVLVDLQYEGAEC. TPR repeat units follow at residues 37-70, 72-104, 105-138, 154-187, 188-221, 222-255, 268-301, 306-339, and 340-373; these read VEKH…DPDN, IAYY…KMDF, TAAR…NPSE, MQRL…CVWD, AELR…KSDN, TEAF…DQDH, LNKL…EPSV, VRSK…EPDN, and VNAL…NEND. The cysteines at positions 248 and 258 are disulfide-linked. A Phosphoserine modification is found at serine 274. An intrachain disulfide couples cysteine 313 to cysteine 329. Residues 375–393 are flexible linker; the sequence is QIREGLEKAQRLLKQSQKR. Positions 394–462 constitute a J domain; that stretch reads DYYKILGVKR…EMRKKFDDGE (69 aa). Residues 451–481 form a disordered region; the sequence is DPEMRKKFDDGEDPLDAESQQGGGGNPFHRS.

Interacts with EIF2AK4/GCN2; this interaction occurs under endoplasmic reticulum (ER) stress, hypothermic and amino acid starving stress conditions and inhibits EIF2AK4/GCN2 kinase activity. Interacts with EIF2AK3. Interacts with EIF2AK2. Forms a trimeric complex with DNAJB1 and HSPA8. Interacts with THAP12. In terms of tissue distribution, widely expressed, with high level in the liver.

It is found in the endoplasmic reticulum. In terms of biological role, involved in the unfolded protein response (UPR) during endoplasmic reticulum (ER) stress. Acts as a negative regulator of the EIF2AK4/GCN2 kinase activity by preventing the phosphorylation of eIF-2-alpha at 'Ser-52' and hence attenuating general protein synthesis under ER stress, hypothermic and amino acid starving stress conditions. Co-chaperone of HSPA8/HSC70, it stimulates its ATPase activity. May inhibit both the autophosphorylation of EIF2AK2/PKR and the ability of EIF2AK2 to catalyze phosphorylation of the EIF2A. May inhibit EIF2AK3/PERK activity. The protein is DnaJ homolog subfamily C member 3 (Dnajc3) of Mus musculus (Mouse).